Consider the following 164-residue polypeptide: Peroxynitrite isomerase 2 (164 aa).

The GXWXGXG motif lies at 17–23 (GSWAGRG). Residue histidine 155 coordinates heme b.

Belongs to the nitrobindin family. Homodimer. Heme b is required as a cofactor.

It catalyses the reaction peroxynitrite = nitrate. The protein operates within nitrogen metabolism. Its function is as follows. Heme-binding protein able to scavenge peroxynitrite and to protect free L-tyrosine against peroxynitrite-mediated nitration, by acting as a peroxynitrite isomerase that converts peroxynitrite to nitrate. Therefore, this protein likely plays a role in peroxynitrite sensing and in the detoxification of reactive nitrogen and oxygen species (RNS and ROS, respectively). Is able to bind nitric oxide (NO) in vitro, but may act as a sensor of peroxynitrite levels in vivo. This Mycobacterium bovis (strain BCG / Pasteur 1173P2) protein is Peroxynitrite isomerase 2.